The sequence spans 253 residues: MAAAFRKAAKSRQREHRERSQPGFRKHLGLLEKKKDYKLRADDYRKKQEYLKALRKKALEKNPDEFYYKMTRVKLQDGVHIIKETKEEVTPEQLKLMRTQDVKYIEMKRVAEAKKIERLKSELHLLDFQGKQQNKHVFFFDTKKEVEQFDVATHLQTAPELVDRVFNRPRIETLQKEKVKGVTNQTGLKRIAKERQKQYNCLTQRIEREKKLFVIAQKIQTRKDLMDKTQKVKVKKETVNSPAIYKFQSRRKR.

The tract at residues 1-26 is disordered; sequence MAAAFRKAAKSRQREHRERSQPGFRK. Residues K74, K83, and K86 each participate in a glycyl lysine isopeptide (Lys-Gly) (interchain with G-Cter in SUMO2) cross-link. T90 bears the Phosphothreonine mark. Glycyl lysine isopeptide (Lys-Gly) (interchain with G-Cter in SUMO2) cross-links involve residues K103, K120, K143, K144, K180, K211, K218, K235, and K236. The residue at position 241 (S241) is a Phosphoserine. K246 participates in a covalent cross-link: Glycyl lysine isopeptide (Lys-Gly) (interchain with G-Cter in SUMO2).

Belongs to the UTP11 family. Part of the small subunit (SSU) processome, composed of more than 70 proteins and the RNA chaperone small nucleolar RNA (snoRNA) U3.

The protein localises to the nucleus. The protein resides in the nucleolus. Its function is as follows. Part of the small subunit (SSU) processome, first precursor of the small eukaryotic ribosomal subunit. During the assembly of the SSU processome in the nucleolus, many ribosome biogenesis factors, an RNA chaperone and ribosomal proteins associate with the nascent pre-rRNA and work in concert to generate RNA folding, modifications, rearrangements and cleavage as well as targeted degradation of pre-ribosomal RNA by the RNA exosome. Involved in nucleolar processing of pre-18S ribosomal RNA. This chain is Probable U3 small nucleolar RNA-associated protein 11, found in Homo sapiens (Human).